We begin with the raw amino-acid sequence, 148 residues long: MKALTILGLVLLSVTVQGKIFERCELARTLKKLGLDGYKGVSLANWVCLAKWESGYNTEATNYNPGDESTDYGIFQINSRYWCNNGKTPGAVDACHISCSALLQNNIADAVACAKRVVSDPQGIRAWVAWRNHCQNKDVSQYVKGCGV.

The first 18 residues, 1-18 (MKALTILGLVLLSVTVQG), serve as a signal peptide directing secretion. Positions 19–148 (KIFERCELAR…VSQYVKGCGV (130 aa)) constitute a C-type lysozyme domain. Intrachain disulfides connect cysteine 24–cysteine 146, cysteine 48–cysteine 134, cysteine 83–cysteine 99, and cysteine 95–cysteine 113. Residues glutamate 53 and aspartate 71 contribute to the active site.

The protein belongs to the glycosyl hydrolase 22 family. As to quaternary structure, monomer.

It localises to the secreted. The catalysed reaction is Hydrolysis of (1-&gt;4)-beta-linkages between N-acetylmuramic acid and N-acetyl-D-glucosamine residues in a peptidoglycan and between N-acetyl-D-glucosamine residues in chitodextrins.. Functionally, lysozymes have primarily a bacteriolytic function; those in tissues and body fluids are associated with the monocyte-macrophage system and enhance the activity of immunoagents. Also plays a role in digestion in this species. The chain is Lysozyme C (LYZ) from Semnopithecus entellus (Northern plains gray langur).